Reading from the N-terminus, the 364-residue chain is MGILEKISEIEKEIARTQKNKATEYHLGLLKAKLAKYRAQLLEPSKSSSSKGEGFDVMKSGDARVALIGFPSVGKSTFLSLMTSTASEAASYEFTTLTCIPGVIEYKGANIQLLDLPGIIEGAAQGKGRGRQVIAVARTADVVIMMLDATKGEVQRSLLEKELESVGIRLNKHKPNIYFKPKKGGGISFNSTVTLTQCSEKLVQLILHEYKIFNAEVLFREDCSPDEFIDVIVGNRVYMPCLYVYNKIDQISMEEVDRLARKPDSVVISCGMKLNLDYLLEMLWEYLALTCIYTKKRGQRPDFTDAIILRKGASVEHVCHRIHRSLASQFKYALVWGTSTKYSPQRVGLTHTMEHEDVIQIVKK.

At Lys-21 the chain carries (3S)-3-hydroxylysine. One can recognise an OBG-type G domain in the interval 63-288 (ARVALIGFPS…LLEMLWEYLA (226 aa)). Residues 69 to 76 (GFPSVGKS), 94 to 98 (FTTLT), 115 to 118 (DLPG), 246 to 249 (NKID), and 269 to 271 (SCG) each bind GTP. Mg(2+)-binding residues include Ser-76 and Thr-96. The region spanning 288 to 363 (ALTCIYTKKR…EHEDVIQIVK (76 aa)) is the TGS domain.

The protein belongs to the TRAFAC class OBG-HflX-like GTPase superfamily. OBG GTPase family. Interacts with RWDD1; this interaction confers protection to polyubiquitination and proteolytic degradation. Interacts with JMJD7; this interaction is direct. The cofactor is Mg(2+). Polyubiquitinated. Post-translationally, hydroxylated (with S stereochemistry) at C-3 of Lys-21 by JMJD7.

It localises to the nucleus. It is found in the cytoplasm. It catalyses the reaction GTP + H2O = GDP + phosphate + H(+). Functionally, catalyzes the conversion of GTP to GDP through hydrolysis of the gamma-phosphate bond in GTP. When hydroxylated at C-3 of 'Lys-21' by JMJD7, may bind to RNA and play a role in translation. This chain is Developmentally-regulated GTP-binding protein 2 (DRG2), found in Bos taurus (Bovine).